A 220-amino-acid chain; its full sequence is Protein GrpE (220 aa).

The protein belongs to the GrpE family. In terms of assembly, homodimer.

The protein localises to the cytoplasm. Its function is as follows. Participates actively in the response to hyperosmotic and heat shock by preventing the aggregation of stress-denatured proteins, in association with DnaK and GrpE. It is the nucleotide exchange factor for DnaK and may function as a thermosensor. Unfolded proteins bind initially to DnaJ; upon interaction with the DnaJ-bound protein, DnaK hydrolyzes its bound ATP, resulting in the formation of a stable complex. GrpE releases ADP from DnaK; ATP binding to DnaK triggers the release of the substrate protein, thus completing the reaction cycle. Several rounds of ATP-dependent interactions between DnaJ, DnaK and GrpE are required for fully efficient folding. The sequence is that of Protein GrpE from Bartonella quintana (strain Toulouse) (Rochalimaea quintana).